The following is a 146-amino-acid chain: Protein US8.5 (146 aa).

Residues 63–93 are disordered; that stretch reads LIAIADARGDPPETLPPGAGGAAPACRRPPR. The span at 84–93 shows a compositional bias: low complexity; sequence AAPACRRPPR.

This sequence belongs to the HHV-1 US8.5 protein family. Post-translationally, phosphorylated.

The protein localises to the host nucleus. It is found in the host nucleolus. This is Protein US8.5 from Human herpesvirus 2 (strain HG52) (HHV-2).